The sequence spans 268 residues: Purine nucleoside phosphorylase (268 aa).

Phosphate-binding positions include Ser36, His68, 88 to 90 (RIH), and Ala120. Glu189 is a binding site for a purine D-ribonucleoside. Ser208 lines the phosphate pocket. Position 231 (Asn231) interacts with a purine D-ribonucleoside.

Belongs to the PNP/MTAP phosphorylase family. As to quaternary structure, homotrimer.

The catalysed reaction is a purine 2'-deoxy-D-ribonucleoside + phosphate = a purine nucleobase + 2-deoxy-alpha-D-ribose 1-phosphate. It functions in the pathway purine metabolism; purine nucleoside salvage. In terms of biological role, the purine nucleoside phosphorylases catalyze the phosphorolytic breakdown of the N-glycosidic bond in the beta-(deoxy)ribonucleoside molecules, with the formation of the corresponding free purine bases and pentose-1-phosphate. Cleaves guanosine, inosine, 2'-deoxyguanosine and 2'-deoxyinosine. The sequence is that of Purine nucleoside phosphorylase (punA) from Mycobacterium leprae (strain TN).